Here is a 344-residue protein sequence, read N- to C-terminus: Protein RecA (344 aa).

65–72 (GPESSGKT) is a binding site for ATP. Positions 323 to 337 (ELREKFQPAEAPREA) are enriched in basic and acidic residues. The disordered stretch occupies residues 323–344 (ELREKFQPAEAPREAGDDEDKE).

This sequence belongs to the RecA family.

Its subcellular location is the cytoplasm. Can catalyze the hydrolysis of ATP in the presence of single-stranded DNA, the ATP-dependent uptake of single-stranded DNA by duplex DNA, and the ATP-dependent hybridization of homologous single-stranded DNAs. It interacts with LexA causing its activation and leading to its autocatalytic cleavage. The chain is Protein RecA from Xanthomonas euvesicatoria pv. vesicatoria (strain 85-10) (Xanthomonas campestris pv. vesicatoria).